A 94-amino-acid polypeptide reads, in one-letter code: MLWTYDMMSFQKIYSPTQLANAMKLVRQQNGWTQSELAKKIGIKQATISNFENNPDNTSLTTFFKILQSLELSMTLCDAKNASPEAAEQQDLEW.

One can recognise an HTH cro/C1-type domain in the interval 23–77 (MKLVRQQNGWTQSELAKKIGIKQATISNFENNPDNTSLTTFFKILQSLELSMTLC). A DNA-binding region (H-T-H motif) is located at residues 34-53 (QSELAKKIGIKQATISNFEN).

In terms of assembly, homodimer. Forms a HipA(2)HipB(2) heterotetramer which can interact with DNA. This complex also blocks the toxic activity of HipA.

Antitoxin component of a type II type II toxin-antitoxin (TA) system. Neutralizes the toxic effect of cognate toxin HipA. Represses the hipBA operon promoter. In Escherichia coli O6:H1 (strain CFT073 / ATCC 700928 / UPEC), this protein is Antitoxin HipB (hipB).